We begin with the raw amino-acid sequence, 357 residues long: tRNA/tmRNA (uracil-C(5))-methyltransferase (357 aa).

Residues Gln-180, Tyr-209, Asn-214, Glu-230, and Asp-290 each contribute to the S-adenosyl-L-methionine site. Residue Cys-315 is the Nucleophile of the active site. The active-site Proton acceptor is the Glu-349.

This sequence belongs to the class I-like SAM-binding methyltransferase superfamily. RNA M5U methyltransferase family. TrmA subfamily.

The enzyme catalyses uridine(54) in tRNA + S-adenosyl-L-methionine = 5-methyluridine(54) in tRNA + S-adenosyl-L-homocysteine + H(+). It carries out the reaction uridine(341) in tmRNA + S-adenosyl-L-methionine = 5-methyluridine(341) in tmRNA + S-adenosyl-L-homocysteine + H(+). In terms of biological role, dual-specificity methyltransferase that catalyzes the formation of 5-methyluridine at position 54 (m5U54) in all tRNAs, and that of position 341 (m5U341) in tmRNA (transfer-mRNA). The polypeptide is tRNA/tmRNA (uracil-C(5))-methyltransferase (Campylobacter jejuni subsp. jejuni serotype O:23/36 (strain 81-176)).